Here is a 282-residue protein sequence, read N- to C-terminus: Glutamate racemase (282 aa).

Residues D13 to S14 and Y45 to G46 each bind substrate. C76 functions as the Proton donor/acceptor in the catalytic mechanism. N77–T78 is a binding site for substrate. C186 acts as the Proton donor/acceptor in catalysis. T187–H188 is a binding site for substrate.

This sequence belongs to the aspartate/glutamate racemases family.

It carries out the reaction L-glutamate = D-glutamate. The protein operates within cell wall biogenesis; peptidoglycan biosynthesis. In terms of biological role, provides the (R)-glutamate required for cell wall biosynthesis. This chain is Glutamate racemase, found in Ralstonia pickettii (strain 12J).